Reading from the N-terminus, the 177-residue chain is Large ribosomal subunit protein uL6 (177 aa).

Belongs to the universal ribosomal protein uL6 family. Part of the 50S ribosomal subunit.

This protein binds to the 23S rRNA, and is important in its secondary structure. It is located near the subunit interface in the base of the L7/L12 stalk, and near the tRNA binding site of the peptidyltransferase center. The protein is Large ribosomal subunit protein uL6 of Rhodopseudomonas palustris (strain BisA53).